Consider the following 217-residue polypeptide: Coiled-coil domain-containing protein 124-B (217 aa).

The interval 1-123 is disordered; the sequence is MPKKFQSENT…EKPKTHLEIP (123 aa). Composition is skewed to basic and acidic residues over residues 18–45, 52–74, and 98–123; these read RKAE…DDKH, RKEE…QRLL, and QIEE…LEIP. Residues 41-83 adopt a coiled-coil conformation; the sequence is DDDKHVVRKEHRKEEKEKKRLELLERKKESQRLLDEEDSKMKG.

The protein belongs to the CCDC124 family. In terms of assembly, associates with translationally inactive ribosomes in the nonrotated state.

It is found in the cytoplasm. The protein localises to the cytoskeleton. Its subcellular location is the microtubule organizing center. It localises to the centrosome. The protein resides in the midbody. Functionally, ribosome-binding protein involved in ribosome hibernation: associates with translationally inactive ribosomes and stabilizes the nonrotated conformation of the 80S ribosome, thereby promoting ribosome preservation and storage. The polypeptide is Coiled-coil domain-containing protein 124-B (ccdc124-b) (Xenopus laevis (African clawed frog)).